We begin with the raw amino-acid sequence, 150 residues long: MNKTSLPPIDSIDRQWYVVDAENQTLGRLATEVASILRGKNNPNFTPHLDTGDFVVVVNAEKIQVSGKKPQQKLYRRHSGRPGGMKVETFESLQERIPERIVEKAIKGMLPHNALGRQMYRKLKVYKGTEHPHSAQKPQPLQLNPSATAK.

The disordered stretch occupies residues 127 to 150; it reads KGTEHPHSAQKPQPLQLNPSATAK. Over residues 136–150 the composition is skewed to polar residues; that stretch reads QKPQPLQLNPSATAK.

The protein belongs to the universal ribosomal protein uL13 family. In terms of assembly, part of the 50S ribosomal subunit.

This protein is one of the early assembly proteins of the 50S ribosomal subunit, although it is not seen to bind rRNA by itself. It is important during the early stages of 50S assembly. The sequence is that of Large ribosomal subunit protein uL13 from Synechococcus sp. (strain CC9902).